The following is a 1006-amino-acid chain: Retinoblastoma-related protein (1006 aa).

Residues 411–604 (TPVTTAMTTA…EKGSSMYNSL (194 aa)) form a domain A region. Residues 411–855 (TPVTTAMTTA…NEIFVPAVKP (445 aa)) form a pocket region. Positions 605-724 (IVARPALSAE…PGGGGETCAE (120 aa)) are spacer. The interval 725-855 (TAVNVFFSKI…NEIFVPAVKP (131 aa)) is domain B. Residues 866–893 (AQSGSQVPEAKNNTNGVNPSSPRTSSFP) show a composition bias toward polar residues. The tract at residues 866 to 898 (AQSGSQVPEAKNNTNGVNPSSPRTSSFPSLPDM) is disordered.

It belongs to the retinoblastoma protein (RB) family.

The protein resides in the nucleus. Functionally, regulator of biological processes that recruits a histone deacetylase to control gene transcription. May play a role in the entry into mitosis, negatively regulating the cell proliferation. Formation of stable complexes with geminiviridae replication-associated proteins may create a cellular environment which favors viral DNA replication. This Scutellaria baicalensis (Baical skullcap) protein is Retinoblastoma-related protein (RB).